Here is a 347-residue protein sequence, read N- to C-terminus: Phosphoribosylformylglycinamidine cyclo-ligase (347 aa).

This sequence belongs to the AIR synthase family.

It is found in the cytoplasm. It catalyses the reaction 2-formamido-N(1)-(5-O-phospho-beta-D-ribosyl)acetamidine + ATP = 5-amino-1-(5-phospho-beta-D-ribosyl)imidazole + ADP + phosphate + H(+). It functions in the pathway purine metabolism; IMP biosynthesis via de novo pathway; 5-amino-1-(5-phospho-D-ribosyl)imidazole from N(2)-formyl-N(1)-(5-phospho-D-ribosyl)glycinamide: step 2/2. The sequence is that of Phosphoribosylformylglycinamidine cyclo-ligase from Alcanivorax borkumensis (strain ATCC 700651 / DSM 11573 / NCIMB 13689 / SK2).